An 87-amino-acid chain; its full sequence is Cell division topological specificity factor (87 aa).

Belongs to the MinE family.

In terms of biological role, prevents the cell division inhibition by proteins MinC and MinD at internal division sites while permitting inhibition at polar sites. This ensures cell division at the proper site by restricting the formation of a division septum at the midpoint of the long axis of the cell. The polypeptide is Cell division topological specificity factor (Vibrio vulnificus (strain CMCP6)).